Consider the following 245-residue polypeptide: 14-3-3 protein theta (245 aa).

It belongs to the 14-3-3 family. In terms of assembly, homodimer, and heterodimer with other family members.

It is found in the cytoplasm. In terms of biological role, adapter protein implicated in the regulation of a large spectrum of both general and specialized signaling pathways. Binds to a large number of partners, usually by recognition of a phosphoserine or phosphothreonine motif. Binding generally results in the modulation of the activity of the binding partner. This is 14-3-3 protein theta (YWHAQ) from Gallus gallus (Chicken).